We begin with the raw amino-acid sequence, 417 residues long: Ankyrin repeat and SAM domain-containing protein 4B (417 aa).

The segment at 1-252 (MSTRYHQAAS…SGDFKEKLQL (252 aa)) is mediates localization to microvilli. ANK repeat units follow at residues 31–60 (DGMTPTLLAAYHGNLEALEIICSRGGDPDR), 64–93 (WGNTPLHFAASNGHAHCVSFLVNFGANIFA), and 97–126 (DLQTPLDAAASREQNECVALLDKAATAQNI). Positions 130-164 (KKVTRLKEQAQKNARRQIKECERLQEKHQNKMAHT) form a coiled coil. Residues 151–195 (ERLQEKHQNKMAHTYSKEESGTLSSSKGTFSRSSPSNASAPGTFG) form a disordered region. Polar residues predominate over residues 171-190 (GTLSSSKGTFSRSSPSNASA). Residues 253–346 (SAEEDGSVHH…EWEEDVVDAT (94 aa)) form a mediates interaction with MYO7B region. Ser283 carries the post-translational modification Phosphoserine. The tract at residues 305–330 (RQGASEADEGAADEEGEENGLKDDLP) is disordered. The segment covering 310–322 (EADEGAADEEGEE) has biased composition (acidic residues). The SAM domain maps to 351-403 (FLLSQHLEEFLPIFKREQIDLEALLLCSDEDLQSIQMQLGPRKKVLNAINRRK). A PDZ-binding; mediates interaction with USH1C motif is present at residues 415-417 (TSL).

As to quaternary structure, part of the IMAC/intermicrovillar adhesion complex/intermicrovillar tip-link complex composed of ANKS4B, MYO7B, USH1C, CDHR2 and CDHR5. Interacts with USH1C; the interaction is direct and is required for ANKS4B localization to the tip of microvilli. Interacts with MYO7B; the interaction is direct. May interact with HSPA5. In terms of tissue distribution, expressed in kidney and small intestine.

The protein localises to the cell projection. It localises to the microvillus. Its function is as follows. As part of the intermicrovillar adhesion complex/IMAC plays a role in epithelial brush border differentiation, controlling microvilli organization and length. Plays a role in assembly of the complex. May play a role in cellular response to endoplasmic reticulum stress. The sequence is that of Ankyrin repeat and SAM domain-containing protein 4B from Homo sapiens (Human).